The sequence spans 197 residues: ATP-dependent Clp protease proteolytic subunit (197 aa).

Ser-98 (nucleophile) is an active-site residue. The active site involves His-123.

Belongs to the peptidase S14 family. In terms of assembly, fourteen ClpP subunits assemble into 2 heptameric rings which stack back to back to give a disk-like structure with a central cavity, resembling the structure of eukaryotic proteasomes. Forms large heterooligomeric complexes consisting of an ATPase component (ClpX, ClpC or ClpE) and a proteolytic component (ClpP).

The protein localises to the cytoplasm. The enzyme catalyses Hydrolysis of proteins to small peptides in the presence of ATP and magnesium. alpha-casein is the usual test substrate. In the absence of ATP, only oligopeptides shorter than five residues are hydrolyzed (such as succinyl-Leu-Tyr-|-NHMec, and Leu-Tyr-Leu-|-Tyr-Trp, in which cleavage of the -Tyr-|-Leu- and -Tyr-|-Trp bonds also occurs).. Its activity is regulated as follows. Low intrinsic peptidase activity is stimulated by ATP-binding subunits ClpC, ClpE and ClpX. Activity is disregulated by acyldepsipeptides (ADEP) antibiotics, which negate the need for ATP-binding subunits for activation and which makes it into an unregulated protease. Each ClpP subunit binds 1 ADEP molecule, which prevents binding of ClpX. ADEP binding causes conformational shifts that open the gated pore of the ring. Protease activity is inhibited by diisopropylfluoro-phosphate. Protease activity is inhibited by bortezomib, an oncology drug originally designed to work on the human proteasome. Functionally, cleaves peptides in various proteins in a process that requires ATP hydrolysis. Has a limited peptidase activity in the absence of ATP-binding subunits ClpC, ClpE or ClpX. Has a chymotrypsin-like activity. Plays a major role in the degradation of misfolded proteins. ClpXP is involved in the complete degradation of the site-2 clipped anti-sigma-W factor RsiW. This results in the release of SigW and the transcriptional activation of genes under the control of the sigma-W factor. Probably the major protease that degrades proteins tagged by trans-translation. The protein is ATP-dependent Clp protease proteolytic subunit of Bacillus subtilis (strain 168).